Reading from the N-terminus, the 232-residue chain is 5'-methylthioadenosine/S-adenosylhomocysteine nucleosidase (232 aa).

Catalysis depends on glutamate 12, which acts as the Proton acceptor. Substrate contacts are provided by residues glycine 78, methionine 153, and 174–175 (ME). Aspartate 198 serves as the catalytic Proton donor.

The protein belongs to the PNP/UDP phosphorylase family. MtnN subfamily.

The enzyme catalyses S-adenosyl-L-homocysteine + H2O = S-(5-deoxy-D-ribos-5-yl)-L-homocysteine + adenine. It catalyses the reaction S-methyl-5'-thioadenosine + H2O = 5-(methylsulfanyl)-D-ribose + adenine. The catalysed reaction is 5'-deoxyadenosine + H2O = 5-deoxy-D-ribose + adenine. Its pathway is amino-acid biosynthesis; L-methionine biosynthesis via salvage pathway; S-methyl-5-thio-alpha-D-ribose 1-phosphate from S-methyl-5'-thioadenosine (hydrolase route): step 1/2. Its function is as follows. Catalyzes the irreversible cleavage of the glycosidic bond in both 5'-methylthioadenosine (MTA) and S-adenosylhomocysteine (SAH/AdoHcy) to adenine and the corresponding thioribose, 5'-methylthioribose and S-ribosylhomocysteine, respectively. Also cleaves 5'-deoxyadenosine, a toxic by-product of radical S-adenosylmethionine (SAM) enzymes, into 5-deoxyribose and adenine. This is 5'-methylthioadenosine/S-adenosylhomocysteine nucleosidase from Geobacillus sp. (strain WCH70).